A 317-amino-acid chain; its full sequence is Flavin-dependent thymidylate synthase (317 aa).

An FAD-binding site is contributed by Ser-46. The segment at 55 to 166 (FEWKKEKWIE…ELETDMDFYT (112 aa)) is insert. Positions 100 to 317 (AVKERIKEAF…YRGTDKKNVI (218 aa)) constitute a ThyX domain. Residues 178-181 (QWMR), 189-193 (EVSKR), and Arg-259 contribute to the dUMP site. Residues 181–183 (RHR) and Glu-189 each bind FAD. The ThyX motif motif lies at 181 to 191 (RHRFGSYNEVS). Asn-281 serves as a coordination point for FAD. Position 286 (Arg-286) interacts with dUMP. Arg-286 functions as the Involved in ionization of N3 of dUMP, leading to its activation in the catalytic mechanism.

Belongs to the thymidylate synthase ThyX family. In terms of assembly, homotetramer. FAD serves as cofactor.

It carries out the reaction dUMP + (6R)-5,10-methylene-5,6,7,8-tetrahydrofolate + NADPH + H(+) = dTMP + (6S)-5,6,7,8-tetrahydrofolate + NADP(+). The protein operates within pyrimidine metabolism; dTTP biosynthesis. In terms of biological role, catalyzes the reductive methylation of 2'-deoxyuridine-5'-monophosphate (dUMP) to 2'-deoxythymidine-5'-monophosphate (dTMP) while utilizing 5,10-methylenetetrahydrofolate (mTHF) as the methyl donor, and NADPH and FADH(2) as the reductant. The sequence is that of Flavin-dependent thymidylate synthase from Aquifex aeolicus (strain VF5).